Reading from the N-terminus, the 423-residue chain is Protein MANNAN SYNTHESIS-RELATED 2 (423 aa).

Residues 1 to 6 (MGVDLR) are Cytoplasmic-facing. A helical; Signal-anchor for type II membrane protein membrane pass occupies residues 7–26 (QVVAGILTITMFVMLGQMLH). Residues 27-423 (RDYFDAVQEK…KNHLAYSCFC (397 aa)) are Lumenal-facing. Residue 264-266 (DLR) participates in substrate binding.

Belongs to the glycosyltransferase GT106 family. As to expression, widely expressed.

It localises to the golgi apparatus membrane. It functions in the pathway glycan biosynthesis. Functionally, glycosyltransferase involved in mannan biosynthesis. The chain is Protein MANNAN SYNTHESIS-RELATED 2 from Arabidopsis thaliana (Mouse-ear cress).